Here is a 450-residue protein sequence, read N- to C-terminus: Phosphoglucosamine mutase (450 aa).

The active-site Phosphoserine intermediate is the S103. Residues S103, D243, D245, and D247 each coordinate Mg(2+). At S103 the chain carries Phosphoserine.

The protein belongs to the phosphohexose mutase family. The cofactor is Mg(2+). Post-translationally, activated by phosphorylation.

The catalysed reaction is alpha-D-glucosamine 1-phosphate = D-glucosamine 6-phosphate. Functionally, catalyzes the conversion of glucosamine-6-phosphate to glucosamine-1-phosphate. This is Phosphoglucosamine mutase from Latilactobacillus sakei subsp. sakei (strain 23K) (Lactobacillus sakei subsp. sakei).